The primary structure comprises 334 residues: Cysteine and histidine-rich domain-containing protein 1 (334 aa).

Zn(2+)-binding residues include Cys5, Cys10, Cys24, His27, Cys42, Cys43, Cys59, His64, Cys156, Cys161, Cys175, His178, Cys193, Cys194, Cys210, and His215. CHORD domains are found at residues 5–64 (CYNR…KGQH) and 156–215 (CKNG…KGTH). A CS domain is found at 226–315 (VVPCRHDWHQ…AEFMTWARLE (90 aa)).

In terms of biological role, regulates centrosome duplication. The sequence is that of Cysteine and histidine-rich domain-containing protein 1 (chordc1) from Xenopus laevis (African clawed frog).